Reading from the N-terminus, the 87-residue chain is Small ribosomal subunit protein bS20 (87 aa).

A disordered region spans residues 1–25; it reads MANSAQARKRARQNISHRNRNMSLR. Over residues 7-20 the composition is skewed to basic residues; that stretch reads ARKRARQNISHRNR.

It belongs to the bacterial ribosomal protein bS20 family.

Its function is as follows. Binds directly to 16S ribosomal RNA. The chain is Small ribosomal subunit protein bS20 from Nitrosospira multiformis (strain ATCC 25196 / NCIMB 11849 / C 71).